Reading from the N-terminus, the 263-residue chain is Putative TATA-binding protein pB263R (263 aa).

It belongs to the asfivirus B263R family.

In terms of biological role, putative TATA-binding protein. This chain is Putative TATA-binding protein pB263R, found in African swine fever virus (isolate Warthog/Namibia/Wart80/1980) (ASFV).